Reading from the N-terminus, the 382-residue chain is MPTISIPADPASPDQGLKPFPIQLDSKDGKSGKLVKQIRIKYLTEPNSRSPPLTFINTYGFIYARDLSGGIMNEQSSGIQSGSVTACMMTLGPGPDIKNANRVLAALNGFYVKVRKTSSLKEEAVFELVNVPKLLANHALCKQGRLVCSAEKFVKNPSKMMAGQEYLYFPTFVSLTYCPSNLNYQVAKPILKIRSRFVYSIHMEIIFRLLCKPDSPLLKTYATDPEGRGCLASVWIHVCNILKNKKIKQRGVDSYFSSKAISMQLTVSIADTWGPTVIIKANGHIPKTAAPFFSKDGVACHPLQDVSPALTKSLWSVGCEITKARLILQESNISDLLKTQDLITDQIKIKKGHSHFGRSSFNPFKKAISLPNLTQLGQDDED.

Belongs to the morbillivirus/respirovirus/rubulavirus M protein family.

The protein resides in the virion. In terms of biological role, the M protein has a crucial role in virus assembly and interacts with the RNP complex as well as with the viral membrane. This chain is Matrix protein (M), found in Simiiformes (SV41).